An 82-amino-acid chain; its full sequence is Acyl carrier protein (82 aa).

Positions 4 to 79 (PEMESRLKKI…DALNYIEQKL (76 aa)) constitute a Carrier domain. Ser-39 is subject to O-(pantetheine 4'-phosphoryl)serine.

It belongs to the acyl carrier protein (ACP) family. Post-translationally, 4'-phosphopantetheine is transferred from CoA to a specific serine of apo-ACP by AcpS. This modification is essential for activity because fatty acids are bound in thioester linkage to the sulfhydryl of the prosthetic group.

It localises to the cytoplasm. It functions in the pathway lipid metabolism; fatty acid biosynthesis. In terms of biological role, carrier of the growing fatty acid chain in fatty acid biosynthesis. This is Acyl carrier protein from Roseiflexus sp. (strain RS-1).